The following is a 253-amino-acid chain: Glucosamine-6-phosphate deaminase (253 aa).

Catalysis depends on aspartate 65, which acts as the Proton acceptor; for enolization step. Asparagine 133 acts as the For ring-opening step in catalysis. The active-site Proton acceptor; for ring-opening step is the histidine 135. Glutamate 140 (for ring-opening step) is an active-site residue.

Belongs to the glucosamine/galactosamine-6-phosphate isomerase family. NagB subfamily.

The catalysed reaction is alpha-D-glucosamine 6-phosphate + H2O = beta-D-fructose 6-phosphate + NH4(+). It functions in the pathway amino-sugar metabolism; N-acetylneuraminate degradation; D-fructose 6-phosphate from N-acetylneuraminate: step 5/5. Catalyzes the reversible isomerization-deamination of glucosamine 6-phosphate (GlcN6P) to form fructose 6-phosphate (Fru6P) and ammonium ion. The chain is Glucosamine-6-phosphate deaminase from Corynebacterium glutamicum (strain ATCC 13032 / DSM 20300 / JCM 1318 / BCRC 11384 / CCUG 27702 / LMG 3730 / NBRC 12168 / NCIMB 10025 / NRRL B-2784 / 534).